A 578-amino-acid polypeptide reads, in one-letter code: Cholesterol oxidase (578 aa).

Residues glycine 15, glutamate 34, glycine 85, alanine 90, and valine 230 each coordinate FAD. The Proton acceptor role is filled by histidine 470. Glycine 503 serves as a coordination point for FAD. Residues tryptophan 529 to isoleucine 551 form a disordered region. Residues glycine 533–arginine 546 show a composition bias toward basic and acidic residues.

This sequence belongs to the GMC oxidoreductase family. FAD is required as a cofactor.

The protein localises to the secreted. It catalyses the reaction cholesterol + O2 = cholest-5-en-3-one + H2O2. The catalysed reaction is cholest-5-en-3-one = cholest-4-en-3-one. It participates in steroid metabolism; cholesterol degradation. In terms of biological role, bifunctional enzyme that catalyzes the oxidation and isomerization of cholesterol to cholestenone (cholest-4-en-3-one), an initial step in the cholesterol degradation process. Contributes to virulence. This chain is Cholesterol oxidase (choD), found in Mycobacterium tuberculosis (strain CDC 1551 / Oshkosh).